The chain runs to 330 residues: MRCCHICKLPGRVMGIRVLRLSLVVILVLLLVAGALTALLPSVKEDKMLMLRREIKSQGKSTMDSFTLIMQTYNRTDLLLKLLNHYQAVPNLHKVIVVWNNIGEKAPDELWNSLGPHPIPVIFKQQTANRMRNRLQVFPELETNAVLMVDDDTLISTPDLVFAFSVWQQFPDQIVGFVPRKHVSTSSGIYSYGSFEMQAPGSGNGDQYSMVLIGASFFNSKYLELFQRQPAAVHALIDDTQNCDDIAMNFIIAKHIGKTSGIFVKPVNMDNLEKETNSGYSGMWHRAEHALQRSYCINKLVNIYDSMPLRYSNIMISQFGFPYANYKRKI.

Residues 1-22 (MRCCHICKLPGRVMGIRVLRLS) are Cytoplasmic-facing. Residues 23-43 (LVVILVLLLVAGALTALLPSV) form a helical; Signal-anchor for type II membrane protein membrane-spanning segment. The Lumenal portion of the chain corresponds to 44 to 330 (KEDKMLMLRR…FPYANYKRKI (287 aa)). Gln-71 contacts UDP-N-acetyl-alpha-D-galactosamine. A UDP-N-acetyl-alpha-D-glucosamine-binding site is contributed by Gln-71. Asn-74 carries N-linked (GlcNAc...) asparagine glycosylation. UDP-N-acetyl-alpha-D-galactosamine-binding residues include Arg-75, Asn-100, Asn-129, Arg-134, Asp-150, Asp-151, Asp-152, and Asp-244. Residues Arg-75, Asn-100, Asn-129, Arg-134, Asp-150, Asp-151, Asp-152, Asp-244, Asp-245, and Arg-293 each contribute to the UDP-N-acetyl-alpha-D-glucosamine site. Asp-152 contributes to the Mn(2+) binding site. An intrachain disulfide couples Cys-243 to Cys-296. The active site involves Asp-245. A UDP-N-acetyl-alpha-D-galactosamine-binding site is contributed by Arg-293.

It belongs to the glycosyltransferase 47 family. Requires Mn(2+) as cofactor. Post-translationally, the soluble form derives from the membrane form by proteolytic processing. As to expression, ubiquitous.

The protein localises to the endoplasmic reticulum membrane. Its subcellular location is the secreted. The catalysed reaction is 3-O-(beta-D-GlcA-(1-&gt;3)-beta-D-Gal-(1-&gt;3)-beta-D-Gal-(1-&gt;4)-beta-D-Xyl)-L-seryl-[protein] + UDP-N-acetyl-alpha-D-glucosamine = 3-O-(alpha-D-GlcNAc-(1-&gt;4)-beta-D-GlcA-(1-&gt;3)-beta-D-Gal-(1-&gt;3)-beta-D-Gal-(1-&gt;4)-beta-D-Xyl)-L-seryl-[protein] + UDP + H(+). The protein operates within glycan metabolism; heparan sulfate biosynthesis. Functionally, glycosyltransferase required for the biosynthesis of heparan-sulfate and responsible for the alternating addition of beta-1-4-linked glucuronic acid (GlcA) and alpha-1-4-linked N-acetylglucosamine (GlcNAc) units to nascent heparan sulfate chains. The protein is Exostosin-like 2 (EXTL2) of Homo sapiens (Human).